We begin with the raw amino-acid sequence, 564 residues long: Septation ring formation regulator EzrA (564 aa).

The Extracellular portion of the chain corresponds to 1 to 4 (MVLY). Residues 5 to 23 (IILAIIVIILIAVGVLFYL) form a helical membrane-spanning segment. The Cytoplasmic portion of the chain corresponds to 24 to 564 (RSNKRQIIEK…KHIEEEVIKQ (541 aa)). 5 coiled-coil regions span residues 99-138 (SFNA…YKDN), 190-223 (DGNY…LIRE), 271-300 (LISR…LIEH), 350-435 (VRQF…RRLL), and 471-550 (VKQL…ESVE).

It belongs to the EzrA family.

It localises to the cell membrane. Functionally, negative regulator of FtsZ ring formation; modulates the frequency and position of FtsZ ring formation. Inhibits FtsZ ring formation at polar sites. Interacts either with FtsZ or with one of its binding partners to promote depolymerization. The polypeptide is Septation ring formation regulator EzrA (Staphylococcus aureus (strain JH1)).